Here is a 453-residue protein sequence, read N- to C-terminus: 3-phosphoshikimate 1-carboxyvinyltransferase (453 aa).

Positions 1–25 (MSHDSEPQPVTAHPAGPLTGALKPP) are disordered. Residues K28, S29, and R33 each coordinate 3-phosphoshikimate. Phosphoenolpyruvate is bound at residue K28. Phosphoenolpyruvate contacts are provided by G101 and R129. Residues S175, Q177, D330, and K357 each contribute to the 3-phosphoshikimate site. Phosphoenolpyruvate is bound at residue Q177. Catalysis depends on D330, which acts as the Proton acceptor. Phosphoenolpyruvate contacts are provided by R361 and R405.

Belongs to the EPSP synthase family. In terms of assembly, monomer.

The protein localises to the cytoplasm. The catalysed reaction is 3-phosphoshikimate + phosphoenolpyruvate = 5-O-(1-carboxyvinyl)-3-phosphoshikimate + phosphate. It participates in metabolic intermediate biosynthesis; chorismate biosynthesis; chorismate from D-erythrose 4-phosphate and phosphoenolpyruvate: step 6/7. Its function is as follows. Catalyzes the transfer of the enolpyruvyl moiety of phosphoenolpyruvate (PEP) to the 5-hydroxyl of shikimate-3-phosphate (S3P) to produce enolpyruvyl shikimate-3-phosphate and inorganic phosphate. This Methylorubrum populi (strain ATCC BAA-705 / NCIMB 13946 / BJ001) (Methylobacterium populi) protein is 3-phosphoshikimate 1-carboxyvinyltransferase.